A 1588-amino-acid chain; its full sequence is Paternally-expressed gene 3 protein (1588 aa).

The region spanning 46-128 is the SCAN box domain; the sequence is HQRFRNLIYV…TLLENYKEMY (83 aa). Disordered stretches follow at residues 128-230, 266-306, and 319-349; these read YQPE…ESYQ, DGHS…RRGI, and KFIK…MSDD. Over residues 129-142 the composition is skewed to acidic residues; sequence QPEDDNNSDVTSDD. Basic and acidic residues-rich tracts occupy residues 143-152, 161-182, 206-225, and 295-306; these read DMTRNRRESS, SGDR…DRWS, FEMD…RSQD, and PEAKKSTHRRGI. 3 C2H2-type zinc fingers span residues 454–476, 507–529, and 565–587; these read YVCD…QIMH, FECK…RKIH, and YECR…QKIH. Residues 588–607 are compositionally biased toward basic and acidic residues; it reads FGDDKDNEREHERERERGET. Residues 588–610 form a disordered region; the sequence is FGDDKDNEREHERERERGETFRP. The segment at 627-649 adopts a C2H2-type 4 zinc-finger fold; sequence YECKVCGETFLHSSSLKEHQKIH. The segment at 838–930 is disordered; it reads LVASKPPRSH…EFSVPSSNVR (93 aa). The segment covering 868-881 has biased composition (basic and acidic residues); it reads LNDKRQKIPARENP. The segment at 969-991 adopts a C2H2-type 5 zinc-finger fold; it reads YECQECGECFAHSSDLTEHQKIH. The disordered stretch occupies residues 1056–1104; that stretch reads EKSHGEESQGENTDGEETHSEETHGQETIEDPVIQGSDMEDPQKDDPDD. A compositionally biased stretch (basic and acidic residues) spans 1071–1082; it reads EETHSEETHGQE. 5 consecutive C2H2-type zinc fingers follow at residues 1107-1129, 1163-1185, 1225-1247, 1282-1304, and 1332-1354; these read YECE…QKVH, YECP…QRIH, IRCL…MRLH, FECA…VTVH, and YECK…KELH. The interval 1393-1495 is disordered; sequence EAAEPEVEAX…GIEDPEEGED (103 aa). Residues 1395 to 1415 are compositionally biased toward acidic residues; that stretch reads AEPEVEAXEPEVEAAEPEVEA. 7 tandem repeats follow at residues 1397–1403, 1404–1410, 1411–1417, 1418–1422, 1425–1429, 1432–1436, and 1439–1443. The segment at 1397–1417 is 3 X 7 AA repeat of P-E-V-E-A-A-E; it reads PEVEAXEPEVEAAEPEVEAAE. The interval 1418-1443 is 4 X 5 AA repeat of P-X-G-E-A; that stretch reads PNGEAEGPDGEAAEPIGEAGQPNGEA. Composition is skewed to acidic residues over residues 1449-1466 and 1475-1495; these read DADE…ERAE and PEGD…EGED. 2 consecutive C2H2-type zinc fingers follow at residues 1505–1527 and 1564–1586; these read YDCH…LKTH and FKCD…QNTH.

This sequence belongs to the krueppel C2H2-type zinc-finger protein family. Homodimer. Interacts with SIAH1A and SIAH2. Interacts with TRAF2.

The protein resides in the nucleus. The protein localises to the cytoplasm. In terms of biological role, induces apoptosis in cooperation with SIAH1A. Acts as a mediator between p53/TP53 and BAX in a neuronal death pathway that is activated by DNA damage. Acts synergistically with TRAF2 and inhibits TNF induced apoptosis through activation of NF-kappa-B. The protein is Paternally-expressed gene 3 protein (PEG3) of Pan paniscus (Pygmy chimpanzee).